A 666-amino-acid polypeptide reads, in one-letter code: Pentatricopeptide repeat-containing protein At1g64100 (666 aa).

PPR repeat units lie at residues 105–139, 140–174, 175–209, 225–259, 260–294, 295–329, 330–364, 365–399, 400–430, 431–465, 466–500, 501–535, 536–570, 571–605, and 606–640; these read TAVD…RIPL, NIYS…GFQP, DVVT…GFLE, VVIT…GLHI, DVVT…HIKP, DVVI…GIAP, NVFT…EINP, DVLT…CIFP, DTVT…MASP, DVVT…GLVA, NTTT…GVCP, DTIT…KIDL, DTVA…GVEP, DVQT…GHEP, and DNST…GFSG.

This sequence belongs to the PPR family. P subfamily.

The polypeptide is Pentatricopeptide repeat-containing protein At1g64100 (Arabidopsis thaliana (Mouse-ear cress)).